A 223-amino-acid polypeptide reads, in one-letter code: Adenylate kinase (223 aa).

10–15 is an ATP binding site; the sequence is GSGKGT. Positions 30–59 are NMP; the sequence is ESGAIFREHIGGGTELGMKAKGYIDKGELV. AMP-binding positions include S31, R36, 57–59, 84–87, and Q91; these read ELV and GFPR. Residues 125–164 form an LID region; it reads GRRLCANDPNHPNNIFIDAIKPNGDKCRVCGGDLKTRSDD. R126 contacts ATP. Residues R161 and R173 each contribute to the AMP site. G209 provides a ligand contact to ATP.

The protein belongs to the adenylate kinase family. As to quaternary structure, monomer.

The protein resides in the cytoplasm. The enzyme catalyses AMP + ATP = 2 ADP. It participates in purine metabolism; AMP biosynthesis via salvage pathway; AMP from ADP: step 1/1. Catalyzes the reversible transfer of the terminal phosphate group between ATP and AMP. Plays an important role in cellular energy homeostasis and in adenine nucleotide metabolism. The sequence is that of Adenylate kinase from Solidesulfovibrio magneticus (strain ATCC 700980 / DSM 13731 / RS-1) (Desulfovibrio magneticus).